The primary structure comprises 138 residues: Large ribosomal subunit protein uL16 (138 aa).

It belongs to the universal ribosomal protein uL16 family. As to quaternary structure, part of the 50S ribosomal subunit.

Functionally, binds 23S rRNA and is also seen to make contacts with the A and possibly P site tRNAs. In Anaeromyxobacter sp. (strain Fw109-5), this protein is Large ribosomal subunit protein uL16.